A 605-amino-acid chain; its full sequence is Lysophospholipase 1 (605 aa).

The N-terminal stretch at 1–17 (MILHHLLILLIINYCVA) is a signal peptide. The PLA2c domain occupies 30–565 (SCPSSQLIRS…ENYCWDGTIY (536 aa)). 7 N-linked (GlcNAc...) asparagine glycosylation sites follow: asparagine 199, asparagine 261, asparagine 399, asparagine 451, asparagine 465, asparagine 492, and asparagine 573.

It belongs to the lysophospholipase family.

The protein localises to the secreted. It carries out the reaction a 1-acyl-sn-glycero-3-phosphocholine + H2O = sn-glycerol 3-phosphocholine + a fatty acid + H(+). Its function is as follows. Catalyzes the release of fatty acids from lysophospholipids. Phospholipase B may well contribute to pathogenicity by abetting the fungus in damaging and traversing host cell membranes, processes which likely increase the rapidity of disseminated infection. The protein is Lysophospholipase 1 of Candida albicans (strain SC5314 / ATCC MYA-2876) (Yeast).